We begin with the raw amino-acid sequence, 724 residues long: Methionine--tRNA ligase (724 aa).

The 'HIGH' region motif lies at 11–21 (PYANGPIHAGH). The Zn(2+) site is built by Cys143, Cys146, Cys156, and Cys159. The 'KMSKS' region signature appears at 344–348 (KFSTS). Residue Thr347 participates in ATP binding. A tRNA-binding domain is found at 624–724 (EFSKIDLRIG…KEVKLGAKVR (101 aa)).

Belongs to the class-I aminoacyl-tRNA synthetase family. MetG type 1 subfamily. As to quaternary structure, homodimer. Zn(2+) serves as cofactor.

Its subcellular location is the cytoplasm. The enzyme catalyses tRNA(Met) + L-methionine + ATP = L-methionyl-tRNA(Met) + AMP + diphosphate. Its function is as follows. Is required not only for elongation of protein synthesis but also for the initiation of all mRNA translation through initiator tRNA(fMet) aminoacylation. This chain is Methionine--tRNA ligase, found in Pyrococcus furiosus (strain ATCC 43587 / DSM 3638 / JCM 8422 / Vc1).